Reading from the N-terminus, the 273-residue chain is Non-homologous end joining protein Ku (273 aa).

In terms of domain architecture, Ku spans 10–193 (AFGLVNVPVK…KVEIKPAELK (184 aa)). The tract at residues 111-273 (FLEPDSKSSK…KANSNVPTPP (163 aa)) is sufficient for interaction with LigD.

Belongs to the prokaryotic Ku family. In terms of assembly, homodimer. Interacts with LigD.

With LigD forms a non-homologous end joining (NHEJ) DNA repair enzyme, which repairs dsDNA breaks with reduced fidelity. Binds linear dsDNA with 5'- and 3'- overhangs but not closed circular dsDNA nor ssDNA. Recruits and stimulates the ligase activity of LigD. The protein is Non-homologous end joining protein Ku (mku) of Mycobacterium tuberculosis (strain CDC 1551 / Oshkosh).